Here is a 456-residue protein sequence, read N- to C-terminus: Bifunctional protein GlmU (456 aa).

The segment at 1–229 (MTKKALSAVI…VMEVEGANNR (229 aa)) is pyrophosphorylase. UDP-N-acetyl-alpha-D-glucosamine-binding positions include 11 to 14 (LAAG), K25, Q76, 81 to 82 (GT), 103 to 105 (YGD), G140, E154, N169, and N227. Mg(2+) is bound at residue D105. N227 is a binding site for Mg(2+). Residues 230–250 (LQLAALERYFQNKQASKLLLE) are linker. Residues 251 to 456 (GVMIYDPARF…QGWQRPIKKK (206 aa)) are N-acetyltransferase. UDP-N-acetyl-alpha-D-glucosamine is bound by residues R333 and K351. The active-site Proton acceptor is H363. UDP-N-acetyl-alpha-D-glucosamine contacts are provided by Y366 and N377. Acetyl-CoA is bound by residues A380, 386–387 (NY), S405, A423, and R440.

The protein in the N-terminal section; belongs to the N-acetylglucosamine-1-phosphate uridyltransferase family. It in the C-terminal section; belongs to the transferase hexapeptide repeat family. Homotrimer. The cofactor is Mg(2+).

It localises to the cytoplasm. It carries out the reaction alpha-D-glucosamine 1-phosphate + acetyl-CoA = N-acetyl-alpha-D-glucosamine 1-phosphate + CoA + H(+). The catalysed reaction is N-acetyl-alpha-D-glucosamine 1-phosphate + UTP + H(+) = UDP-N-acetyl-alpha-D-glucosamine + diphosphate. It functions in the pathway nucleotide-sugar biosynthesis; UDP-N-acetyl-alpha-D-glucosamine biosynthesis; N-acetyl-alpha-D-glucosamine 1-phosphate from alpha-D-glucosamine 6-phosphate (route II): step 2/2. The protein operates within nucleotide-sugar biosynthesis; UDP-N-acetyl-alpha-D-glucosamine biosynthesis; UDP-N-acetyl-alpha-D-glucosamine from N-acetyl-alpha-D-glucosamine 1-phosphate: step 1/1. It participates in bacterial outer membrane biogenesis; LPS lipid A biosynthesis. In terms of biological role, catalyzes the last two sequential reactions in the de novo biosynthetic pathway for UDP-N-acetylglucosamine (UDP-GlcNAc). The C-terminal domain catalyzes the transfer of acetyl group from acetyl coenzyme A to glucosamine-1-phosphate (GlcN-1-P) to produce N-acetylglucosamine-1-phosphate (GlcNAc-1-P), which is converted into UDP-GlcNAc by the transfer of uridine 5-monophosphate (from uridine 5-triphosphate), a reaction catalyzed by the N-terminal domain. The sequence is that of Bifunctional protein GlmU from Haemophilus influenzae (strain 86-028NP).